Reading from the N-terminus, the 268-residue chain is 4-hydroxy-tetrahydrodipicolinate reductase (268 aa).

NAD(+) contacts are provided by residues 8–13 (GAAGRM) and Asp-35. Residue Arg-36 coordinates NADP(+). NAD(+) contacts are provided by residues 99-101 (GTT) and 123-126 (AANF). His-156 acts as the Proton donor/acceptor in catalysis. Residue His-157 coordinates (S)-2,3,4,5-tetrahydrodipicolinate. Residue Lys-160 is the Proton donor of the active site. A (S)-2,3,4,5-tetrahydrodipicolinate-binding site is contributed by 166–167 (GT).

The protein belongs to the DapB family.

It localises to the cytoplasm. It catalyses the reaction (S)-2,3,4,5-tetrahydrodipicolinate + NAD(+) + H2O = (2S,4S)-4-hydroxy-2,3,4,5-tetrahydrodipicolinate + NADH + H(+). The enzyme catalyses (S)-2,3,4,5-tetrahydrodipicolinate + NADP(+) + H2O = (2S,4S)-4-hydroxy-2,3,4,5-tetrahydrodipicolinate + NADPH + H(+). The protein operates within amino-acid biosynthesis; L-lysine biosynthesis via DAP pathway; (S)-tetrahydrodipicolinate from L-aspartate: step 4/4. Functionally, catalyzes the conversion of 4-hydroxy-tetrahydrodipicolinate (HTPA) to tetrahydrodipicolinate. The chain is 4-hydroxy-tetrahydrodipicolinate reductase from Pseudomonas aeruginosa (strain LESB58).